Here is a 159-residue protein sequence, read N- to C-terminus: Phosphopantetheine adenylyltransferase (159 aa).

Ser8 is a binding site for substrate. ATP-binding positions include 8 to 9 (SF) and His16. Substrate-binding residues include Lys40, Leu73, and Lys87. Residues 88–90 (GLR), Glu98, and 122–128 (YGYVSST) contribute to the ATP site.

This sequence belongs to the bacterial CoaD family. Homohexamer. It depends on Mg(2+) as a cofactor.

The protein resides in the cytoplasm. The catalysed reaction is (R)-4'-phosphopantetheine + ATP + H(+) = 3'-dephospho-CoA + diphosphate. The protein operates within cofactor biosynthesis; coenzyme A biosynthesis; CoA from (R)-pantothenate: step 4/5. In terms of biological role, reversibly transfers an adenylyl group from ATP to 4'-phosphopantetheine, yielding dephospho-CoA (dPCoA) and pyrophosphate. The chain is Phosphopantetheine adenylyltransferase from Corynebacterium efficiens (strain DSM 44549 / YS-314 / AJ 12310 / JCM 11189 / NBRC 100395).